A 519-amino-acid chain; its full sequence is 4-nitrophenol 2-monooxygenase, oxygenase component (519 aa).

This sequence belongs to the FADH(2)-utilizing monooxygenase family. As to quaternary structure, homotetramer. 4-nitrophenol 2-monooxygenase complex consists of an oxygenase component NphA1 and a flavin reductase component NphA2. The cofactor is FAD.

It carries out the reaction 4-nitrophenol + NADH + O2 + H(+) = 4-nitrocatechol + NAD(+) + H2O. Partially inhibited by concentrations of FAD above 10 uM and completely inhibited by concentrations above 50 uM. Functionally, utilizes the flavins supplied by NphA2 to catalyze the degradation of 4-nitrophenol (4-NP) via 4-nitrocatechol (4-NC) which is used as the sole carbon, nitrogen, and energy source. Can also degrade phenol and 4-chlorophenol as rapidly as 4-NP. This is 4-nitrophenol 2-monooxygenase, oxygenase component (nphA1) from Rhodococcus sp.